Here is a 355-residue protein sequence, read N- to C-terminus: 4-dimethylallyltryptophan N-methyltransferase easF (355 aa).

The protein belongs to the methyltransferase superfamily. As to quaternary structure, homodimer.

It carries out the reaction 4-(3-methylbut-2-enyl)-L-tryptophan + S-adenosyl-L-methionine = 4-(3-methylbut-2-enyl)-L-abrine + S-adenosyl-L-homocysteine + H(+). It participates in alkaloid biosynthesis; ergot alkaloid biosynthesis. Functionally, 4-dimethylallyltryptophan N-methyltransferase; part of the gene cluster that mediates the biosynthesis of fungal ergot alkaloid. DmaW catalyzes the first step of ergot alkaloid biosynthesis by condensing dimethylallyl diphosphate (DMAP) and tryptophan to form 4-dimethylallyl-L-tryptophan. The second step is catalyzed by the methyltransferase easF that methylates 4-dimethylallyl-L-tryptophan in the presence of S-adenosyl-L-methionine, resulting in the formation of 4-dimethylallyl-L-abrine. The catalase easC and the FAD-dependent oxidoreductase easE then transform 4-dimethylallyl-L-abrine to chanoclavine-I which is further oxidized by easD in the presence of NAD(+), resulting in the formation of chanoclavine-I aldehyde. Agroclavine dehydrogenase easG then mediates the conversion of chanoclavine-I aldehyde to agroclavine via a non-enzymatic adduct reaction: the substrate is an iminium intermediate that is formed spontaneously from chanoclavine-I aldehyde in the presence of glutathione. Further conversion of agroclavine to paspalic acid is a two-step process involving oxidation of agroclavine to elymoclavine and of elymoclavine to paspalic acid, the second step being performed by the elymoclavine oxidase cloA. However, cloA does not encode a functional enzyme indicating that C.fusiformis terminates its ergot alkaloid pathway at elymoclavine. This is 4-dimethylallyltryptophan N-methyltransferase easF from Claviceps fusiformis (Ergot fungus).